Here is a 141-residue protein sequence, read N- to C-terminus: Nucleoside diphosphate kinase (141 aa).

ATP contacts are provided by Lys-9, Phe-57, Arg-85, Thr-91, Arg-102, and Asn-112. The active-site Pros-phosphohistidine intermediate is the His-115.

It belongs to the NDK family. Homotetramer. Mg(2+) is required as a cofactor.

The protein localises to the cytoplasm. The enzyme catalyses a 2'-deoxyribonucleoside 5'-diphosphate + ATP = a 2'-deoxyribonucleoside 5'-triphosphate + ADP. It carries out the reaction a ribonucleoside 5'-diphosphate + ATP = a ribonucleoside 5'-triphosphate + ADP. In terms of biological role, major role in the synthesis of nucleoside triphosphates other than ATP. The ATP gamma phosphate is transferred to the NDP beta phosphate via a ping-pong mechanism, using a phosphorylated active-site intermediate. The polypeptide is Nucleoside diphosphate kinase (Prosthecochloris aestuarii (strain DSM 271 / SK 413)).